Reading from the N-terminus, the 147-residue chain is Putative pre-16S rRNA nuclease (147 aa).

Belongs to the YqgF nuclease family.

It is found in the cytoplasm. Could be a nuclease involved in processing of the 5'-end of pre-16S rRNA. This chain is Putative pre-16S rRNA nuclease, found in Polynucleobacter necessarius subsp. necessarius (strain STIR1).